The sequence spans 228 residues: 7-cyano-7-deazaguanine synthase (228 aa).

Leu7–Leu17 is an ATP binding site. Zn(2+) is bound by residues Cys192, Cys200, Cys203, and Cys206.

Belongs to the QueC family. Homodimer. It depends on Zn(2+) as a cofactor.

It carries out the reaction 7-carboxy-7-deazaguanine + NH4(+) + ATP = 7-cyano-7-deazaguanine + ADP + phosphate + H2O + H(+). It participates in purine metabolism; 7-cyano-7-deazaguanine biosynthesis. In terms of biological role, catalyzes the ATP-dependent conversion of 7-carboxy-7-deazaguanine (CDG) to 7-cyano-7-deazaguanine (preQ(0)). This is 7-cyano-7-deazaguanine synthase from Desulforamulus reducens (strain ATCC BAA-1160 / DSM 100696 / MI-1) (Desulfotomaculum reducens).